We begin with the raw amino-acid sequence, 77 residues long: Conotoxin LiC42 (77 aa).

Positions 1–22 are cleaved as a signal peptide; sequence MKLTCVLIIAVLFLTASQLITA. Positions 23–47 are excised as a propeptide; sequence DYSRDKQEYGAERLRDAMGKFKGSR. Intrachain disulfides connect Cys49/Cys62, Cys56/Cys67, and Cys61/Cys76.

It belongs to the conotoxin O1 superfamily. In terms of tissue distribution, expressed by the venom duct.

It is found in the secreted. The chain is Conotoxin LiC42 from Conus lividus (Livid cone).